We begin with the raw amino-acid sequence, 583 residues long: Aspartate--tRNA ligase (583 aa).

Position 174 (Glu-174) interacts with L-aspartate. The interval 198 to 201 (QITK) is aspartate. Residue Arg-220 participates in L-aspartate binding. ATP is bound by residues 220–222 (RDE) and Gln-229. Residue His-443 coordinates L-aspartate. Glu-477 is an ATP binding site. Residue Arg-484 participates in L-aspartate binding. Residue 529-532 (GLDR) participates in ATP binding.

This sequence belongs to the class-II aminoacyl-tRNA synthetase family. Type 1 subfamily. As to quaternary structure, homodimer.

The protein localises to the cytoplasm. The catalysed reaction is tRNA(Asp) + L-aspartate + ATP = L-aspartyl-tRNA(Asp) + AMP + diphosphate. In terms of biological role, catalyzes the attachment of L-aspartate to tRNA(Asp) in a two-step reaction: L-aspartate is first activated by ATP to form Asp-AMP and then transferred to the acceptor end of tRNA(Asp). The protein is Aspartate--tRNA ligase of Streptococcus agalactiae serotype V (strain ATCC BAA-611 / 2603 V/R).